Here is an 826-residue protein sequence, read N- to C-terminus: U-box domain-containing protein 4 (826 aa).

A coiled-coil region spans residues 172–204; it reads RSNQEILIEAVALERQKEMAEQSENNAEVEFLD. The U-box domain occupies 229–303; it reads AILADFFCPL…ANWCETNDVK (75 aa). The tract at residues 330-501 is disordered; that stretch reads GADVSARKVS…TRRDLSDFSP (172 aa). The segment covering 347-360 has biased composition (polar residues); sequence ASSSETGKPSFSSR. Residues 391–414 show a composition bias toward basic and acidic residues; it reads DARRGSLNDFEDRSNDSRELRTDA. Phosphoserine is present on Ser-396. Low complexity predominate over residues 416–428; it reads GRSSVSSTTRGSV. The segment covering 492 to 501 has biased composition (basic and acidic residues); that stretch reads TRRDLSDFSP. 7 ARM repeats span residues 530 to 570, 573 to 612, 614 to 653, 655 to 694, 696 to 734, 736 to 775, and 778 to 817; these read NETR…LLAK, MDNR…NLSI, DNNK…SLSV, EENK…NLSI, QENK…NLAT, PEGR…QLST, and GRFC…YFRN.

The catalysed reaction is S-ubiquitinyl-[E2 ubiquitin-conjugating enzyme]-L-cysteine + [acceptor protein]-L-lysine = [E2 ubiquitin-conjugating enzyme]-L-cysteine + N(6)-ubiquitinyl-[acceptor protein]-L-lysine.. Its pathway is protein modification; protein ubiquitination. Its function is as follows. Functions as an E3 ubiquitin ligase. The protein is U-box domain-containing protein 4 (PUB4) of Arabidopsis thaliana (Mouse-ear cress).